The primary structure comprises 225 residues: UPF0758 protein XOO0462 (225 aa).

Positions 102–224 (ALSDPPSVGR…PVSLAERGWL (123 aa)) constitute an MPN domain. Residues His-173, His-175, and Asp-186 each coordinate Zn(2+). The JAMM motif motif lies at 173-186 (HNHPSGNPEPSEAD).

Belongs to the UPF0758 family.

The polypeptide is UPF0758 protein XOO0462 (Xanthomonas oryzae pv. oryzae (strain MAFF 311018)).